The following is a 158-amino-acid chain: UPF0225 protein Pput_1155 (158 aa).

This sequence belongs to the UPF0225 family.

In Pseudomonas putida (strain ATCC 700007 / DSM 6899 / JCM 31910 / BCRC 17059 / LMG 24140 / F1), this protein is UPF0225 protein Pput_1155.